The chain runs to 97 residues: MARKYEIMYIIRPNIEEDEKKAVVERFDGILTENGAEIIESKEWGKRRLAYEINDYRDGFYHIVKLNADKADSINEFDRLAKISDDIIRHMVIKEEA.

The protein belongs to the bacterial ribosomal protein bS6 family.

Functionally, binds together with bS18 to 16S ribosomal RNA. In Listeria monocytogenes serotype 4b (strain CLIP80459), this protein is Small ribosomal subunit protein bS6.